A 103-amino-acid polypeptide reads, in one-letter code: Small ribosomal subunit protein uS10 (103 aa).

It belongs to the universal ribosomal protein uS10 family. Part of the 30S ribosomal subunit.

Involved in the binding of tRNA to the ribosomes. In Desulfatibacillum aliphaticivorans, this protein is Small ribosomal subunit protein uS10.